Consider the following 75-residue polypeptide: Mitotic-spindle organizing protein 1 (75 aa).

It belongs to the MOZART1 family. In terms of assembly, part of the gamma-tubulin complex.

It localises to the cytoplasm. The protein resides in the cytoskeleton. The protein localises to the microtubule organizing center. It is found in the centrosome. Its subcellular location is the spindle. In terms of biological role, required for gamma-tubulin complex recruitment to the centrosome. The sequence is that of Mitotic-spindle organizing protein 1 (mzt1) from Danio rerio (Zebrafish).